A 147-amino-acid polypeptide reads, in one-letter code: 3-dehydroquinate dehydratase (147 aa).

Catalysis depends on tyrosine 24, which acts as the Proton acceptor. Asparagine 75, histidine 81, and aspartate 88 together coordinate substrate. Histidine 101 functions as the Proton donor in the catalytic mechanism. Residues 102–103 (IS) and arginine 112 each bind substrate.

The protein belongs to the type-II 3-dehydroquinase family. As to quaternary structure, homododecamer.

The enzyme catalyses 3-dehydroquinate = 3-dehydroshikimate + H2O. The protein operates within metabolic intermediate biosynthesis; chorismate biosynthesis; chorismate from D-erythrose 4-phosphate and phosphoenolpyruvate: step 3/7. In terms of biological role, catalyzes a trans-dehydration via an enolate intermediate. This chain is 3-dehydroquinate dehydratase, found in Cereibacter sphaeroides (strain ATCC 17023 / DSM 158 / JCM 6121 / CCUG 31486 / LMG 2827 / NBRC 12203 / NCIMB 8253 / ATH 2.4.1.) (Rhodobacter sphaeroides).